The sequence spans 473 residues: ATP synthase subunit beta (473 aa).

ATP is bound at residue 156–163 (GGAGVGKT).

Belongs to the ATPase alpha/beta chains family. F-type ATPases have 2 components, CF(1) - the catalytic core - and CF(0) - the membrane proton channel. CF(1) has five subunits: alpha(3), beta(3), gamma(1), delta(1), epsilon(1). CF(0) has three main subunits: a(1), b(2) and c(9-12). The alpha and beta chains form an alternating ring which encloses part of the gamma chain. CF(1) is attached to CF(0) by a central stalk formed by the gamma and epsilon chains, while a peripheral stalk is formed by the delta and b chains.

It localises to the cell inner membrane. The catalysed reaction is ATP + H2O + 4 H(+)(in) = ADP + phosphate + 5 H(+)(out). Functionally, produces ATP from ADP in the presence of a proton gradient across the membrane. The catalytic sites are hosted primarily by the beta subunits. The protein is ATP synthase subunit beta of Desulfovibrio desulfuricans (strain ATCC 27774 / DSM 6949 / MB).